The chain runs to 289 residues: CRISPR-associated endoribonuclease Cas6 2 (289 aa).

The protein belongs to the CRISPR-associated endoribonuclease Cas6 family. As to quaternary structure, possibly part of the aCascade ribonucleoprotein complex. It depends on Mg(2+) as a cofactor.

CRISPR (clustered regularly interspaced short palindromic repeat) is an adaptive immune system that provides protection against mobile genetic elements (viruses, transposable elements and conjugative plasmids). CRISPR clusters contain sequences complementary to antecedent mobile elements and target invading nucleic acids. CRISPR clusters are transcribed and processed into CRISPR RNA (crRNA). Functions as a ssRNA-specific endoribonuclease, generating an 8 base-long tag known as the 5' handle. The chain is CRISPR-associated endoribonuclease Cas6 2 (cas6b) from Saccharolobus solfataricus (strain ATCC 35092 / DSM 1617 / JCM 11322 / P2) (Sulfolobus solfataricus).